The sequence spans 199 residues: Recombination protein RecR (199 aa).

The C4-type zinc-finger motif lies at 58–73 (CRTCFSLSDQPECRIC). Positions 81–176 (SIICVVEKPT…NVTRIASGVP (96 aa)) constitute a Toprim domain.

Belongs to the RecR family.

Its function is as follows. May play a role in DNA repair. It seems to be involved in an RecBC-independent recombinational process of DNA repair. It may act with RecF and RecO. The chain is Recombination protein RecR from Desulforapulum autotrophicum (strain ATCC 43914 / DSM 3382 / VKM B-1955 / HRM2) (Desulfobacterium autotrophicum).